The sequence spans 156 residues: Jun dimerization protein 2 (156 aa).

The segment at 56–95 (KRPFDAIKSEDDDDDERKKRRREKNKVAAARCRNRKKERT) is disordered. One can recognise a bZIP domain in the interval 70–133 (DERKKRRREK…QQLIVMLNLH (64 aa)). The basic motif stretch occupies residues 72–94 (RKKRRREKNKVAAARCRNRKKER). The tract at residues 98–126 (LQKESERLEMLNSDLKSQIEELKSERQQL) is leucine-zipper.

Belongs to the bZIP family. ATF subfamily.

It localises to the nucleus. Functionally, component of the AP-1 transcription factor that represses transactivation mediated by the Jun family of proteins. The chain is Jun dimerization protein 2 (jdp2) from Danio rerio (Zebrafish).